A 215-amino-acid polypeptide reads, in one-letter code: Imidazole glycerol phosphate synthase subunit HisH (215 aa).

Residues 9–215 form the Glutamine amidotransferase type-1 domain; sequence EVVLVDYGLG…QNFVDYCLER (207 aa). Residue C85 is the Nucleophile of the active site. Active-site residues include H193 and E195.

Heterodimer of HisH and HisF.

The protein localises to the cytoplasm. It carries out the reaction 5-[(5-phospho-1-deoxy-D-ribulos-1-ylimino)methylamino]-1-(5-phospho-beta-D-ribosyl)imidazole-4-carboxamide + L-glutamine = D-erythro-1-(imidazol-4-yl)glycerol 3-phosphate + 5-amino-1-(5-phospho-beta-D-ribosyl)imidazole-4-carboxamide + L-glutamate + H(+). It catalyses the reaction L-glutamine + H2O = L-glutamate + NH4(+). It participates in amino-acid biosynthesis; L-histidine biosynthesis; L-histidine from 5-phospho-alpha-D-ribose 1-diphosphate: step 5/9. In terms of biological role, IGPS catalyzes the conversion of PRFAR and glutamine to IGP, AICAR and glutamate. The HisH subunit catalyzes the hydrolysis of glutamine to glutamate and ammonia as part of the synthesis of IGP and AICAR. The resulting ammonia molecule is channeled to the active site of HisF. This is Imidazole glycerol phosphate synthase subunit HisH from Natronomonas pharaonis (strain ATCC 35678 / DSM 2160 / CIP 103997 / JCM 8858 / NBRC 14720 / NCIMB 2260 / Gabara) (Halobacterium pharaonis).